The following is a 297-amino-acid chain: Ribonuclease HIII (297 aa).

Residues 81 to 297 (IPIIGTDEVG…NTKKAQALLK (217 aa)) enclose the RNase H type-2 domain. Positions 87, 88, and 192 each coordinate a divalent metal cation.

The protein belongs to the RNase HII family. RnhC subfamily. Mn(2+) is required as a cofactor. Mg(2+) serves as cofactor.

It is found in the cytoplasm. The enzyme catalyses Endonucleolytic cleavage to 5'-phosphomonoester.. Its function is as follows. Endonuclease that specifically degrades the RNA of RNA-DNA hybrids. The sequence is that of Ribonuclease HIII from Streptococcus agalactiae serotype III (strain NEM316).